The primary structure comprises 1386 residues: Pleckstrin homology domain-containing family G member 2 (1386 aa).

Disordered regions lie at residues 1–21 (MPEG…GCGR) and 36–82 (TAPA…PLPG). 2 stretches are compositionally biased toward low complexity: residues 8–17 (LSLSKPSPSL) and 45–62 (SPRG…GSEG). Ser-90 carries the phosphoserine modification. The 182-residue stretch at 102–283 (RLERVAREIV…TAVAWYINDM (182 aa)) folds into the DH domain. One can recognise a PH domain in the interval 313–411 (ELVLEGAFRG…WIHCLQRLFF (99 aa)). 5 disordered regions span residues 436 to 540 (KSKP…PSGT), 554 to 612 (GLRD…PSPL), 701 to 739 (EPAE…EEGV), 790 to 815 (ILED…RTAS), and 829 to 859 (QQMQ…SPCL). Phosphothreonine is present on Thr-445. Phosphoserine is present on residues Ser-450 and Ser-469. Residues 592 to 603 (SEEEEEEEEGLE) show a composition bias toward acidic residues. 2 positions are modified to phosphoserine: Ser-911 and Ser-1049. Disordered regions lie at residues 1037–1099 (PVPK…PLPC) and 1162–1191 (TSPK…DTQV). 2 stretches are compositionally biased toward polar residues: residues 1048 to 1059 (ESPTNIPLTKQG) and 1073 to 1086 (QPIQ…SSLD). A Phosphothreonine modification is found at Thr-1257. Residues Ser-1261 and Ser-1310 each carry the phosphoserine modification. Disordered stretches follow at residues 1291-1333 (ARRQ…ARRL) and 1367-1386 (TQES…PFHM). The segment covering 1301 to 1317 (PAASRGSWSSAPTSRAS) has biased composition (low complexity). Pro residues predominate over residues 1318–1330 (SPPPQPQPPPPPA).

May be a transforming oncogene with exchange activity for CDC42. May be a guanine-nucleotide exchange factor (GEF) for RAC1 and CDC42. Activated by the binding to subunits beta and gamma of the heterotrimeric guanine nucleotide-binding protein (G protein). Involved in the regulation of actin polymerization. The sequence is that of Pleckstrin homology domain-containing family G member 2 (PLEKHG2) from Homo sapiens (Human).